The sequence spans 63 residues: Beta-defensin 3 (63 aa).

An N-terminal signal peptide occupies residues 1–20 (MRIHYLLFAFLLVLLSPPAA). The propeptide occupies 21 to 22 (FS). 3 cysteine pairs are disulfide-bonded: C31–C59, C38–C52, and C42–C60.

The protein belongs to the beta-defensin family. LAP/TAP subfamily. In terms of tissue distribution, highest expression in salivary glands, epididymis, ovary and pancreas and to a lesser extent in lung, liver and brain. Low or no expression in skeletal muscle and tongue.

It localises to the secreted. Its function is as follows. Antimicrobial activity against Gram-negative bacteria E.coli and P.aeruginosa. This is Beta-defensin 3 (Defb3) from Mus musculus (Mouse).